A 339-amino-acid polypeptide reads, in one-letter code: Nitrilase (339 aa).

The region spanning 7–277 is the CN hydrolase domain; it reads YRVAAVQASP…EGITYADIDL (271 aa). The active-site Proton acceptor is Glu-47. Catalysis depends on Lys-128, which acts as the Proton donor. Cys-162 acts as the Nucleophile in catalysis.

Belongs to the carbon-nitrogen hydrolase superfamily. Nitrilase family.

The enzyme catalyses a nitrile + 2 H2O = a carboxylate + NH4(+). The protein is Nitrilase (nit) of Bacillus sp. (strain OxB-1).